An 86-amino-acid chain; its full sequence is Protein Vpu (86 aa).

Residues 1 to 12 lie on the Extracellular side of the membrane; that stretch reads MLELIGRIDYRL. A helical transmembrane segment spans residues 13–33; that stretch reads GVGALIVALIIVIIVWTIAYI. Over 34–86 the chain is Cytoplasmic; that stretch reads EYRKLVRQRRIDWLVKRIKERAEDSGNESGGDTEELETMVDMGHLRLLDGNDL. Residues serine 58 and serine 62 each carry the phosphoserine; by host CK2 modification.

This sequence belongs to the HIV-1 VPU protein family. Homopentamer. Interacts with host CD4 and BRTC; these interactions induce proteasomal degradation of CD4. Interacts with host BST2; this interaction leads to the degradation of host BST2. Interacts with host FBXW11. Interacts with host AP1M1; this interaction plays a role in the mistrafficking and subsequent degradation of host BST2. Interacts with host RANBP2; this interaction allows Vpu to down-regulate host BLM sumoylation. Phosphorylated by host CK2. This phosphorylation is necessary for interaction with human BTRC and degradation of CD4.

The protein resides in the host membrane. Ion channel activity is inhibited by hexamethylene amiloride in vitro. Its function is as follows. Enhances virion budding, by targeting human CD4 and Tetherin/BST2 to proteasome degradation. Degradation of CD4 prevents any unwanted premature interactions between viral Env and its host receptor CD4 in the endoplasmic reticulum. Degradation of antiretroviral protein Tetherin/BST2 is important for virion budding, as BST2 tethers new viral particles to the host cell membrane. Mechanistically, Vpu bridges either CD4 or BST2 to BTRC, a substrate recognition subunit of the Skp1/Cullin/F-box protein E3 ubiquitin ligase, induces their ubiquitination and subsequent proteasomal degradation. The alteration of the E3 ligase specificity by Vpu seems to promote the degradation of host IKBKB, leading to NF-kappa-B down-regulation and subsequent apoptosis. Acts as a viroporin that forms an oligomeric ion channel in membranes. Modulates the host DNA repair mechanisms to promote degradation of nuclear viral cDNA in cells that are already productively infected in order to suppress immune sensing and proviral hyper-integration (superinfection). Manipulates PML-NBs and modulates SUMOylation of host BLM protein thereby enhancing its DNA-end processing activity toward viral unintegrated linear DNA. Also inhibits RAD52-mediated homologous repair of viral cDNA, preventing the generation of dead-end circular forms of single copies of the long terminal repeat and permitting sustained nucleolytic attack. The chain is Protein Vpu from Homo sapiens (Human).